The chain runs to 284 residues: 2-dehydro-3-deoxyphosphooctonate aldolase (284 aa).

It belongs to the KdsA family.

It localises to the cytoplasm. It carries out the reaction D-arabinose 5-phosphate + phosphoenolpyruvate + H2O = 3-deoxy-alpha-D-manno-2-octulosonate-8-phosphate + phosphate. Its pathway is carbohydrate biosynthesis; 3-deoxy-D-manno-octulosonate biosynthesis; 3-deoxy-D-manno-octulosonate from D-ribulose 5-phosphate: step 2/3. The protein operates within bacterial outer membrane biogenesis; lipopolysaccharide biosynthesis. The polypeptide is 2-dehydro-3-deoxyphosphooctonate aldolase (Ralstonia pickettii (strain 12J)).